We begin with the raw amino-acid sequence, 211 residues long: Arginine exporter protein ArgO (211 aa).

The next 6 membrane-spanning stretches (helical) occupy residues 1–21 (MISY…PLGP), 37–57 (LMIA…GIFG), 68–88 (LLAL…FGAL), 111–131 (IIAT…DTFV), 147–167 (WFAL…ALLA), and 179–199 (AQRI…FQLA).

It belongs to the LysE/ArgO transporter (TC 2.A.75) family.

The protein localises to the cell inner membrane. It carries out the reaction L-arginine(in) = L-arginine(out). Involved in the export of arginine. Important to control the intracellular level of arginine and the correct balance between arginine and lysine. The protein is Arginine exporter protein ArgO of Salmonella paratyphi B (strain ATCC BAA-1250 / SPB7).